A 131-amino-acid chain; its full sequence is Actin-associated protein FAM107A (131 aa).

A coiled-coil region spans residues 57–77 (VLEHRRRNQLIKKKEEELEAK). Positions 61-71 (RRRNQLIKKKE) match the Nuclear localization signal motif.

In terms of assembly, interacts with ACTB. Interacts with COMMD1; this interaction stabilizes COMMD1 in the nucleus. Interacts with MAP1A. Interacts with PRDX1. Interacts with F-actin.

It localises to the nucleus. The protein localises to the cytoplasm. Its subcellular location is the cytoskeleton. The protein resides in the stress fiber. It is found in the cell junction. It localises to the focal adhesion. The protein localises to the cell projection. Its subcellular location is the ruffle membrane. The protein resides in the synapse. Functionally, stress-inducible actin-binding protein that plays a role in synaptic and cognitive functions by modulating actin filamentous (F-actin) dynamics. Mediates polymerization of globular actin to F-actin. Also binds to, stabilizes and bundles F-actin. Involved in synaptic function by regulating neurite outgrowth in an actin-dependent manner and for the acquisition of hippocampus-dependent cognitive function, such as learning and long-term memory. Plays a role in the actin and microtubule cytoskeleton organization; negatively regulates focal adhesion (FA) assembly promoting malignant glial cell migration in an actin-, microtubule- and MAP1A-dependent manner. Also involved in neuroblastoma G1/S phase cell cycle progression and cell proliferation inhibition by stimulating ubiquitination of NF-kappa-B subunit RELA and NF-kappa-B degradation in a COMMD1- and actin-dependent manner. May play a role in tumor development. The protein is Actin-associated protein FAM107A of Rattus norvegicus (Rat).